The following is a 163-amino-acid chain: Crossover junction endodeoxyribonuclease RuvC (163 aa).

Residues Asp-7, Glu-66, and Asp-139 contribute to the active site. 3 residues coordinate Mg(2+): Asp-7, Glu-66, and Asp-139.

The protein belongs to the RuvC family. Homodimer which binds Holliday junction (HJ) DNA. The HJ becomes 2-fold symmetrical on binding to RuvC with unstacked arms; it has a different conformation from HJ DNA in complex with RuvA. In the full resolvosome a probable DNA-RuvA(4)-RuvB(12)-RuvC(2) complex forms which resolves the HJ. It depends on Mg(2+) as a cofactor.

The protein localises to the cytoplasm. The catalysed reaction is Endonucleolytic cleavage at a junction such as a reciprocal single-stranded crossover between two homologous DNA duplexes (Holliday junction).. Functionally, the RuvA-RuvB-RuvC complex processes Holliday junction (HJ) DNA during genetic recombination and DNA repair. Endonuclease that resolves HJ intermediates. Cleaves cruciform DNA by making single-stranded nicks across the HJ at symmetrical positions within the homologous arms, yielding a 5'-phosphate and a 3'-hydroxyl group; requires a central core of homology in the junction. The consensus cleavage sequence is 5'-(A/T)TT(C/G)-3'. Cleavage occurs on the 3'-side of the TT dinucleotide at the point of strand exchange. HJ branch migration catalyzed by RuvA-RuvB allows RuvC to scan DNA until it finds its consensus sequence, where it cleaves and resolves the cruciform DNA. The protein is Crossover junction endodeoxyribonuclease RuvC of Thermomicrobium roseum (strain ATCC 27502 / DSM 5159 / P-2).